Consider the following 251-residue polypeptide: 3-deoxy-manno-octulosonate cytidylyltransferase (251 aa).

It belongs to the KdsB family.

It is found in the cytoplasm. It carries out the reaction 3-deoxy-alpha-D-manno-oct-2-ulosonate + CTP = CMP-3-deoxy-beta-D-manno-octulosonate + diphosphate. It participates in nucleotide-sugar biosynthesis; CMP-3-deoxy-D-manno-octulosonate biosynthesis; CMP-3-deoxy-D-manno-octulosonate from 3-deoxy-D-manno-octulosonate and CTP: step 1/1. Its pathway is bacterial outer membrane biogenesis; lipopolysaccharide biosynthesis. In terms of biological role, activates KDO (a required 8-carbon sugar) for incorporation into bacterial lipopolysaccharide in Gram-negative bacteria. In Chromobacterium violaceum (strain ATCC 12472 / DSM 30191 / JCM 1249 / CCUG 213 / NBRC 12614 / NCIMB 9131 / NCTC 9757 / MK), this protein is 3-deoxy-manno-octulosonate cytidylyltransferase.